We begin with the raw amino-acid sequence, 1124 residues long: Zinc finger E-box-binding homeobox 1 (1124 aa).

Disordered regions lie at residues 1–124 and 142–163; these read MADG…NHDP and APEE…NGTP. Residues 18-30 show a composition bias toward low complexity; sequence NNVTNYNTVVETN. Residues S31 and S33 each carry the phosphoserine modification. The segment covering 44–62 has biased composition (acidic residues); the sequence is EESVTDAADCEGVPEDDLP. Basic and acidic residues predominate over residues 72–91; that stretch reads SSEREGNAKNCWEDDRKEGQ. Residues 170 to 193 form a C2H2-type 1 zinc finger; sequence LTCPYCDRGYKRFTSLKEHIKYRH. Glycyl lysine isopeptide (Lys-Gly) (interchain with G-Cter in SUMO2) cross-links involve residues K186 and K195. C2H2-type zinc fingers lie at residues 200–222 and 240–262; these read FSCS…MTSH and FKCT…LRIH. The segment at 268–292 adopts a C2H2-type 4; atypical zinc-finger fold; sequence YECPNCKKRFSHSGSYSSHISSKKC. Positions 304-327 are disordered; it reads TGLKTSQCSSPSLSASPGSPTRPQ. A Glycyl lysine isopeptide (Lys-Gly) (interchain with G-Cter in SUMO2) cross-link involves residue K307. Residues 309–322 show a composition bias toward low complexity; that stretch reads SQCSSPSLSASPGS. Residues S313 and S322 each carry the phosphoserine modification. Residues K331 and K335 each participate in a glycyl lysine isopeptide (Lys-Gly) (interchain with G-Cter in SUMO2) cross-link. K347 is covalently cross-linked (Glycyl lysine isopeptide (Lys-Gly) (interchain with G-Cter in SUMO); alternate). Residue K347 forms a Glycyl lysine isopeptide (Lys-Gly) (interchain with G-Cter in SUMO2); alternate linkage. Glycyl lysine isopeptide (Lys-Gly) (interchain with G-Cter in SUMO2) cross-links involve residues K439, K493, K504, K515, K548, and K553. Disordered regions lie at residues 551 to 586 and 636 to 714; these read DLKQ…SPSQ and QISV…SSSR. The homeobox; atypical DNA-binding region spans 581–640; sequence NLSPSQPPLKNLLSLLKAYYALNAQPSAEELSKIADSVNLPLDVVKKWFEKMQAGQISVQ. A phosphoserine mark is found at S642, S679, S686, S693, and S700. The segment covering 656 to 687 has biased composition (polar residues); the sequence is AKNNDQPQSANANEPQDSTVNLQSPLKMTNSP. A compositionally biased stretch (low complexity) spans 692 to 714; the sequence is GSTTNGSRSSTPSPSPLNLSSSR. T702 is modified (phosphothreonine). The residue at position 704 (S704) is a Phosphoserine. K774 is covalently cross-linked (Glycyl lysine isopeptide (Lys-Gly) (interchain with G-Cter in SUMO); alternate). Residue K774 forms a Glycyl lysine isopeptide (Lys-Gly) (interchain with G-Cter in SUMO2); alternate linkage. Residues 856–898 are disordered; that stretch reads PPLKVIQPNGNQDERQDTSSEGVSNVEDQNDSDSTPPKKKMRK. Polar residues predominate over residues 874–890; it reads SSEGVSNVEDQNDSDST. 2 consecutive C2H2-type zinc fingers follow at residues 904–926 and 932–954; these read YACD…KYEH and HECG…MRLH. A C2H2-type 7; atypical zinc finger spans residues 960–981; it reads YQCDKCGKRFSHSGSYSQHMNH. A disordered region spans residues 989-1124; sequence EAEERDSTEQ…QVSEEKTNEA (136 aa). 2 stretches are compositionally biased toward acidic residues: residues 1031–1052 and 1062–1084; these read EEDE…ELQE and DEEE…ENEG. Positions 1085–1099 are enriched in basic and acidic residues; that stretch reads EEAKTEGLMKDDRAE. Positions 1100 to 1115 are enriched in polar residues; sequence SQASSLGQKVGESSEQ.

This sequence belongs to the delta-EF1/ZFH-1 C2H2-type zinc-finger family. In terms of assembly, interacts (via N-terminus) with SMARCA4/BRG1. In terms of processing, ubiquitinated, leading to degradation in a proteasome-dependent manner. Deubiquitinated by USP51, leading to stabilization. In terms of tissue distribution, colocalizes with SMARCA4/BRG1 in E-cadherin-negative cells from established lines, and stroma of normal colon as well as in de-differentiated epithelial cells at the invasion front of colorectal carcinomas (at protein level). Expressed in heart and skeletal muscle, but not in liver, spleen, or pancreas.

Its subcellular location is the nucleus. Acts as a transcriptional repressor. Inhibits interleukin-2 (IL-2) gene expression. Enhances or represses the promoter activity of the ATP1A1 gene depending on the quantity of cDNA and on the cell type. Represses E-cadherin promoter and induces an epithelial-mesenchymal transition (EMT) by recruiting SMARCA4/BRG1. Represses BCL6 transcription in the presence of the corepressor CTBP1. Positively regulates neuronal differentiation. Represses RCOR1 transcription activation during neurogenesis. Represses transcription by binding to the E box (5'-CANNTG-3'). In the absence of TGFB1, acts as a repressor of COL1A2 transcription via binding to the E-box in the upstream enhancer region. In Homo sapiens (Human), this protein is Zinc finger E-box-binding homeobox 1.